A 351-amino-acid polypeptide reads, in one-letter code: Holliday junction branch migration complex subunit RuvB (351 aa).

Residues 1-189 are large ATPase domain (RuvB-L); the sequence is MTAHDADWSD…FGFTAHMDFY (189 aa). ATP is bound by residues leucine 28, arginine 29, glycine 70, lysine 73, threonine 74, serine 75, 136 to 138, arginine 179, tyrosine 189, and arginine 226; that span reads EDF. A Mg(2+)-binding site is contributed by threonine 74. The small ATPAse domain (RuvB-S) stretch occupies residues 190-260; it reads EPAELQQVLA…VAKAALAVYD (71 aa). Positions 263 to 351 are head domain (RuvB-H); the sequence is ELGLDRLDRA…AGLGQPGLFD (89 aa). DNA is bound by residues arginine 318 and arginine 323.

The protein belongs to the RuvB family. In terms of assembly, homohexamer. Forms an RuvA(8)-RuvB(12)-Holliday junction (HJ) complex. HJ DNA is sandwiched between 2 RuvA tetramers; dsDNA enters through RuvA and exits via RuvB. An RuvB hexamer assembles on each DNA strand where it exits the tetramer. Each RuvB hexamer is contacted by two RuvA subunits (via domain III) on 2 adjacent RuvB subunits; this complex drives branch migration. In the full resolvosome a probable DNA-RuvA(4)-RuvB(12)-RuvC(2) complex forms which resolves the HJ.

The protein resides in the cytoplasm. The enzyme catalyses ATP + H2O = ADP + phosphate + H(+). In terms of biological role, the RuvA-RuvB-RuvC complex processes Holliday junction (HJ) DNA during genetic recombination and DNA repair, while the RuvA-RuvB complex plays an important role in the rescue of blocked DNA replication forks via replication fork reversal (RFR). RuvA specifically binds to HJ cruciform DNA, conferring on it an open structure. The RuvB hexamer acts as an ATP-dependent pump, pulling dsDNA into and through the RuvAB complex. RuvB forms 2 homohexamers on either side of HJ DNA bound by 1 or 2 RuvA tetramers; 4 subunits per hexamer contact DNA at a time. Coordinated motions by a converter formed by DNA-disengaged RuvB subunits stimulates ATP hydrolysis and nucleotide exchange. Immobilization of the converter enables RuvB to convert the ATP-contained energy into a lever motion, pulling 2 nucleotides of DNA out of the RuvA tetramer per ATP hydrolyzed, thus driving DNA branch migration. The RuvB motors rotate together with the DNA substrate, which together with the progressing nucleotide cycle form the mechanistic basis for DNA recombination by continuous HJ branch migration. Branch migration allows RuvC to scan DNA until it finds its consensus sequence, where it cleaves and resolves cruciform DNA. The polypeptide is Holliday junction branch migration complex subunit RuvB (Mycobacterium avium (strain 104)).